The primary structure comprises 333 residues: MLKEENTQEILHDLGEQEILNRLRKYMDYGQIDDDTALIKSYKKELIINTDMLVEDVHFSEITTNPNHIGWKAVATNLSDLACSGLEEVIGITVGLSAPSSTPWSWVDGVYTGIKAALNKFGGKLLGGDCSNGKQKTLCITALGTKGPLNLHRSNARPGDYLITSGPHGLSRLGLSLLLSDPITKSINVPNLLKEHAIKAHQEPQPPIKALQTLLKCKPYAMPWNAAATDSSDGLLEAIESLCRSSNCTAVVDHKNLPKHADWPSGKQWNDWCLEGGEDFELVVSLPPNWAKAWLKAMPCTKAIGRMKEGPAKAMWSNGETIQKAMDTKFEHF.

Positions 35, 50, and 51 each coordinate Mg(2+). H58 is a binding site for substrate. D80 lines the Mg(2+) pocket. ATP-binding positions include Y111, 128–129 (GD), and R153. D129 is a binding site for Mg(2+). D230 provides a ligand contact to Mg(2+). S232 lines the ATP pocket. Mg(2+) is bound at residue D233. Positions 278 and 330 each coordinate substrate.

Belongs to the thiamine-monophosphate kinase family.

It carries out the reaction thiamine phosphate + ATP = thiamine diphosphate + ADP. It participates in cofactor biosynthesis; thiamine diphosphate biosynthesis; thiamine diphosphate from thiamine phosphate: step 1/1. Functionally, catalyzes the ATP-dependent phosphorylation of thiamine-monophosphate (TMP) to form thiamine-pyrophosphate (TPP), the active form of vitamin B1. The protein is Thiamine-monophosphate kinase of Prochlorococcus marinus (strain SARG / CCMP1375 / SS120).